A 284-amino-acid polypeptide reads, in one-letter code: tRNA-splicing endonuclease (284 aa).

Residues Tyr-222, His-229, and Lys-257 contribute to the active site.

It belongs to the tRNA-intron endonuclease family. Archaeal long subfamily. Homodimer.

It carries out the reaction pretRNA = a 3'-half-tRNA molecule with a 5'-OH end + a 5'-half-tRNA molecule with a 2',3'-cyclic phosphate end + an intron with a 2',3'-cyclic phosphate and a 5'-hydroxyl terminus.. Endonuclease that removes tRNA introns. Cleaves pre-tRNA at the 5'- and 3'-splice sites to release the intron. The products are an intron and two tRNA half-molecules bearing 2',3' cyclic phosphate and 5'-OH termini. Recognizes a pseudosymmetric substrate in which 2 bulged loops of 3 bases are separated by a stem of 4 bp. The protein is tRNA-splicing endonuclease of Picrophilus torridus (strain ATCC 700027 / DSM 9790 / JCM 10055 / NBRC 100828 / KAW 2/3).